The chain runs to 286 residues: ATP synthase gamma chain (286 aa).

It belongs to the ATPase gamma chain family. As to quaternary structure, F-type ATPases have 2 components, CF(1) - the catalytic core - and CF(0) - the membrane proton channel. CF(1) has five subunits: alpha(3), beta(3), gamma(1), delta(1), epsilon(1). CF(0) has three main subunits: a, b and c.

The protein resides in the cell inner membrane. Its function is as follows. Produces ATP from ADP in the presence of a proton gradient across the membrane. The gamma chain is believed to be important in regulating ATPase activity and the flow of protons through the CF(0) complex. In Pseudomonas entomophila (strain L48), this protein is ATP synthase gamma chain.